Consider the following 179-residue polypeptide: Phosphopantetheine adenylyltransferase (179 aa).

S23 is a substrate binding site. ATP-binding positions include S23–F24 and H31. Residues K55, A87, and R101 each contribute to the substrate site. Residues G102–R104, E112, and F137–S143 each bind ATP.

The protein belongs to the bacterial CoaD family. In terms of assembly, homohexamer. Mg(2+) is required as a cofactor.

The protein localises to the cytoplasm. The enzyme catalyses (R)-4'-phosphopantetheine + ATP + H(+) = 3'-dephospho-CoA + diphosphate. Its pathway is cofactor biosynthesis; coenzyme A biosynthesis; CoA from (R)-pantothenate: step 4/5. Its function is as follows. Reversibly transfers an adenylyl group from ATP to 4'-phosphopantetheine, yielding dephospho-CoA (dPCoA) and pyrophosphate. This chain is Phosphopantetheine adenylyltransferase, found in Rhodopirellula baltica (strain DSM 10527 / NCIMB 13988 / SH1).